We begin with the raw amino-acid sequence, 299 residues long: Oxygen-dependent coproporphyrinogen-III oxidase (299 aa).

A substrate-binding site is contributed by S92. 2 residues coordinate Mn(2+): H96 and H106. The active-site Proton donor is H106. 108–110 (NVR) is a binding site for substrate. Mn(2+) is bound by residues H145 and H175. The segment at 240 to 275 (YVEFNLVWDRGTLFGLQTGGRTESILMSMPPLVRWE) is important for dimerization. 258–260 (GGR) is a binding site for substrate.

This sequence belongs to the aerobic coproporphyrinogen-III oxidase family. In terms of assembly, homodimer. The cofactor is Mn(2+).

The protein resides in the cytoplasm. It carries out the reaction coproporphyrinogen III + O2 + 2 H(+) = protoporphyrinogen IX + 2 CO2 + 2 H2O. It participates in porphyrin-containing compound metabolism; protoporphyrin-IX biosynthesis; protoporphyrinogen-IX from coproporphyrinogen-III (O2 route): step 1/1. In terms of biological role, involved in the heme biosynthesis. Catalyzes the aerobic oxidative decarboxylation of propionate groups of rings A and B of coproporphyrinogen-III to yield the vinyl groups in protoporphyrinogen-IX. The chain is Oxygen-dependent coproporphyrinogen-III oxidase from Escherichia coli O17:K52:H18 (strain UMN026 / ExPEC).